We begin with the raw amino-acid sequence, 1631 residues long: ABC transporter A family member 6 (1631 aa).

7 helical membrane passes run I25 to L45, S242 to I262, S285 to F305, G317 to F337, F346 to S366, V372 to I392, and I416 to V436. An ABC transporter 1 domain is found at I491–N724. G527–S534 is a binding site for ATP. Helical transmembrane passes span S866–K886, A1047–A1067, W1099–I1119, F1127–L1147, A1158–L1178, I1198–I1218, and L1242–L1262. An ABC transporter 2 domain is found at I1309–K1544. G1347–S1354 contributes to the ATP binding site.

It belongs to the ABC transporter superfamily. ABCA family.

It is found in the membrane. This Dictyostelium discoideum (Social amoeba) protein is ABC transporter A family member 6 (abcA6).